Here is a 309-residue protein sequence, read N- to C-terminus: Probable 3-hydroxyacyl-CoA dehydrogenase B0272.3 (309 aa).

The protein belongs to the 3-hydroxyacyl-CoA dehydrogenase family. In terms of assembly, homodimer.

It localises to the mitochondrion matrix. The enzyme catalyses a (3S)-3-hydroxyacyl-CoA + NAD(+) = a 3-oxoacyl-CoA + NADH + H(+). Its pathway is lipid metabolism; fatty acid beta-oxidation. This Caenorhabditis elegans protein is Probable 3-hydroxyacyl-CoA dehydrogenase B0272.3.